The sequence spans 185 residues: Elongation factor P (185 aa).

It belongs to the elongation factor P family.

The protein resides in the cytoplasm. The protein operates within protein biosynthesis; polypeptide chain elongation. In terms of biological role, involved in peptide bond synthesis. Stimulates efficient translation and peptide-bond synthesis on native or reconstituted 70S ribosomes in vitro. Probably functions indirectly by altering the affinity of the ribosome for aminoacyl-tRNA, thus increasing their reactivity as acceptors for peptidyl transferase. This is Elongation factor P from Fervidobacterium nodosum (strain ATCC 35602 / DSM 5306 / Rt17-B1).